Here is a 143-residue protein sequence, read N- to C-terminus: Nucleoside diphosphate kinase (143 aa).

Positions 11, 59, 87, 93, 104, and 114 each coordinate ATP. The Pros-phosphohistidine intermediate role is filled by H117.

This sequence belongs to the NDK family. Homotetramer. Requires Mg(2+) as cofactor.

The protein localises to the cytoplasm. The enzyme catalyses a 2'-deoxyribonucleoside 5'-diphosphate + ATP = a 2'-deoxyribonucleoside 5'-triphosphate + ADP. The catalysed reaction is a ribonucleoside 5'-diphosphate + ATP = a ribonucleoside 5'-triphosphate + ADP. Functionally, major role in the synthesis of nucleoside triphosphates other than ATP. The ATP gamma phosphate is transferred to the NDP beta phosphate via a ping-pong mechanism, using a phosphorylated active-site intermediate. This chain is Nucleoside diphosphate kinase, found in Citrobacter koseri (strain ATCC BAA-895 / CDC 4225-83 / SGSC4696).